Consider the following 382-residue polypeptide: Chorismate synthase (382 aa).

NADP(+) is bound by residues R39 and R45. FMN-binding positions include 128–130, 246–247, A290, 305–309, and R331; these read RAS, QA, and KPIAT.

This sequence belongs to the chorismate synthase family. As to quaternary structure, homotetramer. FMNH2 is required as a cofactor.

It catalyses the reaction 5-O-(1-carboxyvinyl)-3-phosphoshikimate = chorismate + phosphate. The protein operates within metabolic intermediate biosynthesis; chorismate biosynthesis; chorismate from D-erythrose 4-phosphate and phosphoenolpyruvate: step 7/7. Its function is as follows. Catalyzes the anti-1,4-elimination of the C-3 phosphate and the C-6 proR hydrogen from 5-enolpyruvylshikimate-3-phosphate (EPSP) to yield chorismate, which is the branch point compound that serves as the starting substrate for the three terminal pathways of aromatic amino acid biosynthesis. This reaction introduces a second double bond into the aromatic ring system. The protein is Chorismate synthase of Deinococcus geothermalis (strain DSM 11300 / CIP 105573 / AG-3a).